Here is a 415-residue protein sequence, read N- to C-terminus: Transcription factor gsfR2 (415 aa).

The segment at residues 9–36 (CITCVQSKRKCDQGLPKCQRCLAKNIHC) is a DNA-binding region (zn(2)-C6 fungal-type). Residues 65–91 (AEEPSRGCQLQRSPARPTSPTHSPHAN) are disordered. Over residues 72 to 88 (CQLQRSPARPTSPTHSP) the composition is skewed to polar residues.

It is found in the nucleus. Functionally, transcription factor that regulates expression of the gene cluster that mediates the biosynthesis of Griseofulvin, an important antifungal drug that has been in use for a long time for treating dermatophyte infections. The polypeptide is Transcription factor gsfR2 (Penicillium aethiopicum).